The chain runs to 629 residues: tRNA uridine 5-carboxymethylaminomethyl modification enzyme MnmG (629 aa).

FAD contacts are provided by residues 13–18 (GGGHAG), valine 125, and serine 180. 273–287 (GPRYCPSIEDKVMRF) is a binding site for NAD(+). Residue glutamine 370 coordinates FAD.

Belongs to the MnmG family. As to quaternary structure, homodimer. Heterotetramer of two MnmE and two MnmG subunits. FAD is required as a cofactor.

The protein resides in the cytoplasm. In terms of biological role, NAD-binding protein involved in the addition of a carboxymethylaminomethyl (cmnm) group at the wobble position (U34) of certain tRNAs, forming tRNA-cmnm(5)s(2)U34. This is tRNA uridine 5-carboxymethylaminomethyl modification enzyme MnmG from Sodalis glossinidius (strain morsitans).